The following is a 496-amino-acid chain: Maturase K (496 aa).

It belongs to the intron maturase 2 family. MatK subfamily.

Its subcellular location is the plastid. It is found in the chloroplast. Usually encoded in the trnK tRNA gene intron. Probably assists in splicing its own and other chloroplast group II introns. This Paeonia officinalis (Common peony) protein is Maturase K.